Reading from the N-terminus, the 166-residue chain is Disulfide bond formation protein B (166 aa).

Residues 1 to 10 lie on the Cytoplasmic side of the membrane; that stretch reads MGLNITNRQG. Residues 11–27 form a helical membrane-spanning segment; it reads FLLVAAACAGAIGFALF. At 28–45 the chain is on the periplasmic side; it reads AQYQLGEEPCPLCILQRI. A disulfide bond links C37 and C40. A helical membrane pass occupies residues 46-62; it reads GVMAVGALALLAALHNP. Over 63–69 the chain is Cytoplasmic; that stretch reads GKTGAKV. Residues 70 to 86 form a helical membrane-spanning segment; it reads WGGLMTLAALSGAGVSL. Residues 87–143 are Periplasmic-facing; the sequence is RQLWLQSLPADQVPQCGPGLEFLMESFPLWEVLSKVLKGSGECAAIQGRFLGMTMPF. C102 and C129 are disulfide-bonded. Residues 144–162 traverse the membrane as a helical segment; the sequence is WVAVFFAGVIVWTLWLVGR. The Cytoplasmic portion of the chain corresponds to 163–166; that stretch reads RRRG.

Belongs to the DsbB family.

It is found in the cell inner membrane. Functionally, required for disulfide bond formation in some periplasmic proteins. Acts by oxidizing the DsbA protein. The sequence is that of Disulfide bond formation protein B from Chromobacterium violaceum (strain ATCC 12472 / DSM 30191 / JCM 1249 / CCUG 213 / NBRC 12614 / NCIMB 9131 / NCTC 9757 / MK).